The following is a 72-amino-acid chain: Large ribosomal subunit protein bL28 (72 aa).

It belongs to the bacterial ribosomal protein bL28 family.

The chain is Large ribosomal subunit protein bL28 from Chlorobium chlorochromatii (strain CaD3).